The following is a 363-amino-acid chain: 3-isopropylmalate dehydrogenase (363 aa).

NAD(+) is bound at residue 78 to 91; the sequence is GKKWDTLPINERPE. Substrate is bound by residues R99, R109, R138, and D227. D227, D251, and D255 together coordinate Mg(2+). Position 285 to 297 (285 to 297) interacts with NAD(+); it reads GSAPDIQGKNIAN.

This sequence belongs to the isocitrate and isopropylmalate dehydrogenases family. LeuB type 1 subfamily. As to quaternary structure, homodimer. It depends on Mg(2+) as a cofactor. Mn(2+) serves as cofactor.

It is found in the cytoplasm. The enzyme catalyses (2R,3S)-3-isopropylmalate + NAD(+) = 4-methyl-2-oxopentanoate + CO2 + NADH. It participates in amino-acid biosynthesis; L-leucine biosynthesis; L-leucine from 3-methyl-2-oxobutanoate: step 3/4. Functionally, catalyzes the oxidation of 3-carboxy-2-hydroxy-4-methylpentanoate (3-isopropylmalate) to 3-carboxy-4-methyl-2-oxopentanoate. The product decarboxylates to 4-methyl-2 oxopentanoate. The protein is 3-isopropylmalate dehydrogenase of Buchnera aphidicola subsp. Diuraphis noxia.